Here is a 484-residue protein sequence, read N- to C-terminus: Secreted RxLR effector protein 104 (484 aa).

An N-terminal signal peptide occupies residues Met1 to Gly24. The short motif at Arg48–Arg65 is the RxLR-dEER element. N-linked (GlcNAc...) asparagine glycosylation is present at Asn175. A disordered region spans residues Glu324 to Val463. The segment covering Lys327–Gly346 has biased composition (polar residues). The segment covering Ser402–Pro413 has biased composition (low complexity). The span at Asp418 to Leu428 shows a compositional bias: polar residues.

It belongs to the RxLR effector family.

It localises to the secreted. Its subcellular location is the host nucleus. Secreted effector that completely suppresses the host cell death induced by cell death-inducing proteins. The chain is Secreted RxLR effector protein 104 from Plasmopara viticola (Downy mildew of grapevine).